Reading from the N-terminus, the 256-residue chain is Small ribosomal subunit protein eS1 (256 aa).

Basic residues predominate over residues 1-18 (MAVGKNKRLSKGKKGIKK). The tract at residues 1–20 (MAVGKNKRLSKGKKGIKKRT) is disordered. Ala-2 carries the post-translational modification N-acetylalanine; partial.

Belongs to the eukaryotic ribosomal protein eS1 family. In terms of assembly, component of the small ribosomal subunit. Mature ribosomes consist of a small (40S) and a large (60S) subunit. The 40S subunit contains about 33 different proteins and 1 molecule of RNA (18S). The 60S subunit contains about 49 different proteins and 3 molecules of RNA (25S, 5.8S and 5S).

It localises to the cytoplasm. This chain is Small ribosomal subunit protein eS1 (rps1), found in Aspergillus terreus (strain NIH 2624 / FGSC A1156).